We begin with the raw amino-acid sequence, 431 residues long: UDP-N-acetylmuramate--L-alanine ligase (431 aa).

Glycine 108 to threonine 114 is an ATP binding site.

Belongs to the MurCDEF family.

It is found in the cytoplasm. It carries out the reaction UDP-N-acetyl-alpha-D-muramate + L-alanine + ATP = UDP-N-acetyl-alpha-D-muramoyl-L-alanine + ADP + phosphate + H(+). The protein operates within cell wall biogenesis; peptidoglycan biosynthesis. Cell wall formation. This chain is UDP-N-acetylmuramate--L-alanine ligase, found in Campylobacter jejuni subsp. doylei (strain ATCC BAA-1458 / RM4099 / 269.97).